A 445-amino-acid polypeptide reads, in one-letter code: Xylose isomerase (445 aa).

Residues histidine 107 and aspartate 110 contribute to the active site. Glutamate 238, glutamate 274, histidine 277, aspartate 302, aspartate 313, aspartate 315, and aspartate 345 together coordinate Mg(2+).

It belongs to the xylose isomerase family. In terms of assembly, homotetramer. Requires Mg(2+) as cofactor.

It localises to the cytoplasm. It catalyses the reaction alpha-D-xylose = alpha-D-xylulofuranose. This is Xylose isomerase from Bacillus cereus (strain ATCC 10987 / NRS 248).